The chain runs to 185 residues: Ribosome-recycling factor (185 aa).

The interval 137 to 159 (EDLKADEKAKDISEDDRKRMEDE) is disordered.

Belongs to the RRF family.

The protein localises to the cytoplasm. Responsible for the release of ribosomes from messenger RNA at the termination of protein biosynthesis. May increase the efficiency of translation by recycling ribosomes from one round of translation to another. In Erythrobacter litoralis (strain HTCC2594), this protein is Ribosome-recycling factor.